Here is a 446-residue protein sequence, read N- to C-terminus: Tetratricopeptide repeat protein 23 (446 aa).

TPR repeat units follow at residues 45–78, 137–170, 186–219, 310–347, and 356–389; these read LRLS…TRIC, VELF…SKEM, ARIK…TEIS, TAKF…KVAV, and AETY…QTLL. The interval 410–446 is disordered; the sequence is APEVPARPRPSPGAKAAFCAGGRPYSVPGRTRPSAAD.

In terms of assembly, associated with the EvC complex composed of EFCAB7, IQCE, EVC2 and EVC.

It is found in the cell projection. Its subcellular location is the cilium. Participates positively in the ciliary Hedgehog (Hh) signaling. This is Tetratricopeptide repeat protein 23 (TTC23) from Bos taurus (Bovine).